Reading from the N-terminus, the 371-residue chain is Chorismate synthase (371 aa).

NADP(+) contacts are provided by R48 and R54. Residues 130–132, 242–243, G287, 302–306, and R328 contribute to the FMN site; these read RSS, NA, and KPTSS.

This sequence belongs to the chorismate synthase family. As to quaternary structure, homotetramer. It depends on FMNH2 as a cofactor.

The catalysed reaction is 5-O-(1-carboxyvinyl)-3-phosphoshikimate = chorismate + phosphate. Its pathway is metabolic intermediate biosynthesis; chorismate biosynthesis; chorismate from D-erythrose 4-phosphate and phosphoenolpyruvate: step 7/7. Functionally, catalyzes the anti-1,4-elimination of the C-3 phosphate and the C-6 proR hydrogen from 5-enolpyruvylshikimate-3-phosphate (EPSP) to yield chorismate, which is the branch point compound that serves as the starting substrate for the three terminal pathways of aromatic amino acid biosynthesis. This reaction introduces a second double bond into the aromatic ring system. This chain is Chorismate synthase, found in Azorhizobium caulinodans (strain ATCC 43989 / DSM 5975 / JCM 20966 / LMG 6465 / NBRC 14845 / NCIMB 13405 / ORS 571).